Here is a 126-residue protein sequence, read N- to C-terminus: Large-conductance mechanosensitive channel (126 aa).

Transmembrane regions (helical) follow at residues 14 to 34 and 66 to 86; these read VIDL…VNSL and FITT…LVVV.

It belongs to the MscL family. In terms of assembly, homopentamer.

The protein localises to the cell membrane. Functionally, channel that opens in response to stretch forces in the membrane lipid bilayer. May participate in the regulation of osmotic pressure changes within the cell. This Roseiflexus sp. (strain RS-1) protein is Large-conductance mechanosensitive channel.